A 27-amino-acid chain; its full sequence is Ferric reductase B (27 aa).

Homodimer. Requires FAD as cofactor.

The enzyme catalyses 2 a Fe(II)-siderophore + NAD(+) + H(+) = 2 a Fe(III)-siderophore + NADH. Functionally, reductase activity that acts on Fe(3+)-chelates and uses both NADH and NADPH as electron donors. May play a role in iron uptake. This chain is Ferric reductase B (ferB), found in Paracoccus denitrificans.